The chain runs to 460 residues: Probable carboxypeptidase ARB_01041 (460 aa).

Positions M1 to S22 are cleaved as a signal peptide. An N-linked (GlcNAc...) asparagine glycan is attached at N98. D175 serves as a coordination point for Zn(2+). The active-site Proton acceptor is E207. E208 serves as a coordination point for Zn(2+). Residue N395 is glycosylated (N-linked (GlcNAc...) asparagine).

This sequence belongs to the peptidase M20A family. The cofactor is Zn(2+).

It is found in the secreted. The protein is Probable carboxypeptidase ARB_01041 of Arthroderma benhamiae (strain ATCC MYA-4681 / CBS 112371) (Trichophyton mentagrophytes).